An 879-amino-acid chain; its full sequence is Leucine--tRNA ligase (879 aa).

A 'HIGH' region motif is present at residues 46–56 (PYPSGALHMGH). The short motif at 638-642 (KMSKS) is the 'KMSKS' region element. Lys641 provides a ligand contact to ATP.

This sequence belongs to the class-I aminoacyl-tRNA synthetase family.

The protein resides in the cytoplasm. It catalyses the reaction tRNA(Leu) + L-leucine + ATP = L-leucyl-tRNA(Leu) + AMP + diphosphate. The polypeptide is Leucine--tRNA ligase (Xanthomonas campestris pv. campestris (strain 8004)).